The primary structure comprises 301 residues: N-acetylmuramic acid 6-phosphate etherase (301 aa).

Residues 55 to 215 enclose the SIS domain; it reads IADALRAGGR…STISMVALGK (161 aa). Glutamate 83 (proton donor) is an active-site residue. Glutamate 111 is an active-site residue.

Belongs to the GCKR-like family. MurNAc-6-P etherase subfamily. As to quaternary structure, homodimer.

It carries out the reaction N-acetyl-D-muramate 6-phosphate + H2O = N-acetyl-D-glucosamine 6-phosphate + (R)-lactate. It participates in amino-sugar metabolism; 1,6-anhydro-N-acetylmuramate degradation. It functions in the pathway amino-sugar metabolism; N-acetylmuramate degradation. Its pathway is cell wall biogenesis; peptidoglycan recycling. Functionally, specifically catalyzes the cleavage of the D-lactyl ether substituent of MurNAc 6-phosphate, producing GlcNAc 6-phosphate and D-lactate. Together with AnmK, is also required for the utilization of anhydro-N-acetylmuramic acid (anhMurNAc) either imported from the medium or derived from its own cell wall murein, and thus plays a role in cell wall recycling. The chain is N-acetylmuramic acid 6-phosphate etherase from Burkholderia lata (strain ATCC 17760 / DSM 23089 / LMG 22485 / NCIMB 9086 / R18194 / 383).